The chain runs to 136 residues: Ribulose bisphosphate carboxylase small subunit, chloroplastic 1 (136 aa).

A chloroplast-targeting transit peptide spans 1-13; the sequence is NTDITSNGERVKC.

The protein belongs to the RuBisCO small chain family. Heterohexadecamer of 8 large and 8 small subunits.

The protein localises to the plastid. The protein resides in the chloroplast. In terms of biological role, ruBisCO catalyzes two reactions: the carboxylation of D-ribulose 1,5-bisphosphate, the primary event in carbon dioxide fixation, as well as the oxidative fragmentation of the pentose substrate. Both reactions occur simultaneously and in competition at the same active site. Although the small subunit is not catalytic it is essential for maximal activity. This Pisum sativum (Garden pea) protein is Ribulose bisphosphate carboxylase small subunit, chloroplastic 1.